The following is a 378-amino-acid chain: Flap endonuclease 1 (378 aa).

Positions 1 to 104 (MGVKDLSKVI…SELEKRTERR (104 aa)) are N-domain. A Mg(2+)-binding site is contributed by D34. The DNA site is built by R47 and R70. A Mg(2+)-binding site is contributed by D86. Residues 90–113 (PQMKTSELEKRTERRTEAEKQRND) are disordered. Basic and acidic residues predominate over residues 95 to 113 (SELEKRTERRTEAEKQRND). The tract at residues 122–253 (SVNKFEKRLV…KKAFELIKKY (132 aa)) is I-domain. Mg(2+) is bound by residues E158, E160, D179, and D181. E158 provides a ligand contact to DNA. DNA-binding residues include G231 and D233. D233 contributes to the Mg(2+) binding site. The tract at residues 336–344 (QQARIDSFF) is interaction with PCNA. Positions 348–378 (KVVTSETTKRKNEEKNNLKKRGPSLGKKAKK) are disordered. Positions 354-364 (TTKRKNEEKNN) are enriched in basic and acidic residues. Positions 365-378 (LKKRGPSLGKKAKK) are enriched in basic residues.

The protein belongs to the XPG/RAD2 endonuclease family. FEN1 subfamily. Interacts with PCNA. Three molecules of FEN1 bind to one PCNA trimer with each molecule binding to one PCNA monomer. PCNA stimulates the nuclease activity without altering cleavage specificity. Mg(2+) is required as a cofactor. Phosphorylated. Phosphorylation upon DNA damage induces relocalization to the nuclear plasma.

It is found in the nucleus. The protein localises to the nucleolus. The protein resides in the nucleoplasm. Its subcellular location is the mitochondrion. Functionally, structure-specific nuclease with 5'-flap endonuclease and 5'-3' exonuclease activities involved in DNA replication and repair. During DNA replication, cleaves the 5'-overhanging flap structure that is generated by displacement synthesis when DNA polymerase encounters the 5'-end of a downstream Okazaki fragment. It enters the flap from the 5'-end and then tracks to cleave the flap base, leaving a nick for ligation. Also involved in the long patch base excision repair (LP-BER) pathway, by cleaving within the apurinic/apyrimidinic (AP) site-terminated flap. Acts as a genome stabilization factor that prevents flaps from equilibrating into structures that lead to duplications and deletions. Also possesses 5'-3' exonuclease activity on nicked or gapped double-stranded DNA, and exhibits RNase H activity. Also involved in replication and repair of rDNA and in repairing mitochondrial DNA. The chain is Flap endonuclease 1 from Brugia malayi (Filarial nematode worm).